The chain runs to 664 residues: Glycine--tRNA ligase beta subunit (664 aa).

This sequence belongs to the class-II aminoacyl-tRNA synthetase family. In terms of assembly, tetramer of two alpha and two beta subunits.

It is found in the cytoplasm. The enzyme catalyses tRNA(Gly) + glycine + ATP = glycyl-tRNA(Gly) + AMP + diphosphate. This chain is Glycine--tRNA ligase beta subunit, found in Rickettsia africae (strain ESF-5).